A 1040-amino-acid chain; its full sequence is Multidrug resistance protein MdtB (1040 aa).

A run of 12 helical transmembrane segments spans residues 16–36, 347–367, 369–389, 396–416, 440–460, 472–492, 537–557, 863–883, 888–908, 911–931, 968–988, and 998–1018; these read FIMR…AGII, LMMA…NIPA, IIPG…MVFL, LTLM…IVVI, IGFT…PLLF, FAIT…TLTP, WLTL…WVFI, LGST…VLGI, FIHP…ALLA, IAGS…IGIV, ILMT…STGV, and IGMV…TPVI.

Belongs to the resistance-nodulation-cell division (RND) (TC 2.A.6) family. MdtB subfamily. As to quaternary structure, part of a tripartite efflux system composed of MdtA, MdtB and MdtC. MdtB forms a heteromultimer with MdtC.

Its subcellular location is the cell inner membrane. Its function is as follows. The MdtABC tripartite complex confers resistance against novobiocin and deoxycholate. In Escherichia coli O8 (strain IAI1), this protein is Multidrug resistance protein MdtB.